We begin with the raw amino-acid sequence, 556 residues long: Small ribosomal subunit protein bS1 (556 aa).

S1 motif domains are found at residues 35–105, 120–183, 204–272, 289–359, 377–444, and 461–525; these read TIKE…ISQQ, NAII…ISRK, TEPV…LSIK, GYAI…VSLK, DVLE…LSAK, and DSVI…ASVH.

The protein belongs to the bacterial ribosomal protein bS1 family.

In terms of biological role, binds mRNA; thus facilitating recognition of the initiation point. It is needed to translate mRNA with a short Shine-Dalgarno (SD) purine-rich sequence. This is Small ribosomal subunit protein bS1 (rpsA) from Helicobacter pylori (strain ATCC 700392 / 26695) (Campylobacter pylori).